The sequence spans 55 residues: Large ribosomal subunit protein bL33 (55 aa).

The protein belongs to the bacterial ribosomal protein bL33 family.

This Burkholderia ambifaria (strain MC40-6) protein is Large ribosomal subunit protein bL33.